Reading from the N-terminus, the 829-residue chain is Protein SEY1 homolog 2 (829 aa).

The interval 1–21 is disordered; sequence MDEVSPTKHFTSKPLLPTKTP. Residues 1-728 lie on the Cytoplasmic side of the membrane; that stretch reads MDEVSPTKHF…EKENSEIKYQ (728 aa). Positions 83-305 constitute a GB1/RHD3-type G domain; sequence GMDYNAVGIL…FLPQYNKEIP (223 aa). 93-100 lines the GTP pocket; sequence GAQSSGKS. Coiled coils occupy residues 372–396 and 576–596; these read KKIM…YMES and DTIE…IKEL. A helical transmembrane segment spans residues 729–749; the sequence is IPLYLIVLVIFFGFDEFIAIL. Residues 750-752 lie on the Lumenal side of the membrane; the sequence is TNP. A helical membrane pass occupies residues 753–773; the sequence is LLFILTLIIGGGIYIGYKLNL. At 774-829 the chain is on the cytoplasmic side; sequence GGVAKNYIQYLLSMSLSSTMEYLRTIPFFTPLIDKIWPKDDNKDDDSTEETQEETK.

Belongs to the TRAFAC class dynamin-like GTPase superfamily. GB1/RHD3 GTPase family. RHD3 subfamily.

The protein localises to the endoplasmic reticulum membrane. In terms of biological role, probable GTP-binding protein that may be involved in cell development. The sequence is that of Protein SEY1 homolog 2 from Entamoeba dispar (strain ATCC PRA-260 / SAW760).